The primary structure comprises 371 residues: MPHHYILTLFGLLPVATNISTWWNFGSMLLTCLVLQVLTGFFLAVHYTANINLAFSSIVHITRDVPYGWMMQNLHAIGASMFFICIYIHIARGLYYGSYLNKETWMSGITLLITLMATALFGYVLPWGQMSFWAATVITNLLTAVPYLGTSLTTWLWGGFAINDPTLTRFFALHFILPFAIISLSSLHIILLHEEGSSNPLGTNPDIDKIPFHPYHSHKDLLLLTLMMMFLFIIVSFFPDIFNDPDNFSKANPLVTPQHIKPEWYFLFAYGILRSIPNKLGGALALVASIMILFTTPFTHTANLRPMTFRPLSQLMFWTLVSTFITITWAATKPVEPPFIAISQVTSMLYFTFFLSIPILGWMENKMMNTP.

The next 4 helical transmembrane spans lie at 25 to 45 (FGSM…FLAV), 69 to 90 (WMMQ…YIHI), 105 to 125 (WMSG…GYVL), and 170 to 190 (FFAL…LHII). Positions 75 and 89 each coordinate heme b. Residues H174 and H188 each coordinate heme b. A ubiquinone is bound at residue H193. A run of 4 helical transmembrane segments spans residues 218–238 (HKDL…VSFF), 280–300 (LGGA…PFTH), 312–332 (LSQL…WAAT), and 339–358 (FIAI…LSIP).

The protein belongs to the cytochrome b family. The cytochrome bc1 complex contains 3 respiratory subunits (MT-CYB, CYC1 and UQCRFS1), 2 core proteins (UQCRC1 and UQCRC2) and probably 6 low-molecular weight proteins. It depends on heme b as a cofactor.

The protein localises to the mitochondrion inner membrane. In terms of biological role, component of the ubiquinol-cytochrome c reductase complex (complex III or cytochrome b-c1 complex) that is part of the mitochondrial respiratory chain. The b-c1 complex mediates electron transfer from ubiquinol to cytochrome c. Contributes to the generation of a proton gradient across the mitochondrial membrane that is then used for ATP synthesis. This is Cytochrome b (MT-CYB) from Liasis olivaceus (Olive python).